Here is a 268-residue protein sequence, read N- to C-terminus: Thiazole synthase (268 aa).

Lys111 (schiff-base intermediate with DXP) is an active-site residue. 1-deoxy-D-xylulose 5-phosphate-binding positions include Gly172, 198–199, and 220–221; these read AG and NT.

The protein belongs to the ThiG family. As to quaternary structure, homotetramer. Forms heterodimers with either ThiH or ThiS.

Its subcellular location is the cytoplasm. It carries out the reaction [ThiS sulfur-carrier protein]-C-terminal-Gly-aminoethanethioate + 2-iminoacetate + 1-deoxy-D-xylulose 5-phosphate = [ThiS sulfur-carrier protein]-C-terminal Gly-Gly + 2-[(2R,5Z)-2-carboxy-4-methylthiazol-5(2H)-ylidene]ethyl phosphate + 2 H2O + H(+). It functions in the pathway cofactor biosynthesis; thiamine diphosphate biosynthesis. In terms of biological role, catalyzes the rearrangement of 1-deoxy-D-xylulose 5-phosphate (DXP) to produce the thiazole phosphate moiety of thiamine. Sulfur is provided by the thiocarboxylate moiety of the carrier protein ThiS. In vitro, sulfur can be provided by H(2)S. This chain is Thiazole synthase, found in Caulobacter sp. (strain K31).